The chain runs to 274 residues: MTKEKKSFHLHMLSDATGETLISVGRAVASQYTTYQATEHIYPMIRNKIQLEKALDEIKQEPGIVLYTMIDEELKLLLQKICKKIKIPCIDILHPVLNAFQSYLGTPTHLRVSAQHDLNADYFRRIEALDFTIEHDDGQSSSNLFEADVILVGISRTSKTPTSIYLANRGIKTANVPLIPNIDLPESLLEAKNSLIIGLIASAERISHIRQNRDLGEGFAFDNYTNRINIAEELIYAKRICERFGWPVIDVTRRSIEETAAAIFELLSRFREEK.

153–160 is a binding site for ADP; it reads GISRTSKT.

This sequence belongs to the pyruvate, phosphate/water dikinase regulatory protein family. PDRP subfamily.

It catalyses the reaction N(tele)-phospho-L-histidyl/L-threonyl-[pyruvate, phosphate dikinase] + ADP = N(tele)-phospho-L-histidyl/O-phospho-L-threonyl-[pyruvate, phosphate dikinase] + AMP + H(+). The catalysed reaction is N(tele)-phospho-L-histidyl/O-phospho-L-threonyl-[pyruvate, phosphate dikinase] + phosphate + H(+) = N(tele)-phospho-L-histidyl/L-threonyl-[pyruvate, phosphate dikinase] + diphosphate. In terms of biological role, bifunctional serine/threonine kinase and phosphorylase involved in the regulation of the pyruvate, phosphate dikinase (PPDK) by catalyzing its phosphorylation/dephosphorylation. The sequence is that of Putative pyruvate, phosphate dikinase regulatory protein from Bartonella tribocorum (strain CIP 105476 / IBS 506).